The chain runs to 504 residues: Multicopper oxidase MmcO (504 aa).

Residues M1 to A44 constitute a signal peptide (tat-type signal). Cu cation is bound by residues H120, H122, H161, and H163. In terms of domain architecture, Plastocyanin-like spans E190–T349. Residues H437, H440, H442, H485, C486, H487, and H491 each contribute to the Cu cation site.

Belongs to the multicopper oxidase family. It depends on Cu cation as a cofactor. Post-translationally, predicted to be exported by the Tat system. The position of the signal peptide cleavage has not been experimentally proven.

It localises to the cell inner membrane. It is found in the periplasm. The enzyme catalyses 4 Fe(2+) + O2 + 4 H(+) = 4 Fe(3+) + 2 H2O. Functionally, required for copper resistance. In vitro, oxidizes organic substrates and Fe(2+). May act in vivo by oxidation of toxic periplasmic Cu(+). This Mycobacterium tuberculosis (strain ATCC 25618 / H37Rv) protein is Multicopper oxidase MmcO.